Here is a 228-residue protein sequence, read N- to C-terminus: Ankyrin repeat domain-containing protein 46 (228 aa).

ANK repeat units follow at residues 11-40, 44-73, 77-103, and 107-138; these read QTNV…DPNI, RGRT…DLLA, QGNT…KIDI, and QGAT…EVKG. The chain crosses the membrane as a helical span at residues 195-215; that stretch reads VLLLIFVIALLSLGIAYYVSG.

The protein resides in the membrane. The chain is Ankyrin repeat domain-containing protein 46 (ANKRD46) from Pongo abelii (Sumatran orangutan).